The chain runs to 359 residues: DNA integrity scanning protein DisA (359 aa).

The DAC domain occupies 7–145 (DPTGRAVLRA…DGRRWVLEDS (139 aa)). ATP contacts are provided by residues glycine 74, leucine 92, and 105 to 109 (TRHRT).

The protein belongs to the DisA family. In terms of assembly, homooctamer. The cofactor is Mg(2+).

The enzyme catalyses 2 ATP = 3',3'-c-di-AMP + 2 diphosphate. Participates in a DNA-damage check-point. DisA forms globular foci that rapidly scan along the chromosomes searching for lesions. Functionally, also has diadenylate cyclase activity, catalyzing the condensation of 2 ATP molecules into cyclic di-AMP (c-di-AMP). c-di-AMP likely acts as a signaling molecule that may couple DNA integrity with a cellular process. This Beutenbergia cavernae (strain ATCC BAA-8 / DSM 12333 / CCUG 43141 / JCM 11478 / NBRC 16432 / NCIMB 13614 / HKI 0122) protein is DNA integrity scanning protein DisA.